Reading from the N-terminus, the 306-residue chain is Mitochondrial 2-oxoglutarate/malate carrier protein (306 aa).

3 Solcar repeats span residues valine 7–arginine 95, leucine 103–alanine 194, and aspartate 203–alanine 292. Helical transmembrane passes span asparagine 9 to glutamine 38, serine 72 to leucine 93, lysine 108 to valine 122, proline 172 to lysine 192, isoleucine 205 to valine 226, and phenylalanine 268 to leucine 286.

Belongs to the mitochondrial carrier (TC 2.A.29) family. As to quaternary structure, interacts with ant-1.1 and ced-9. In terms of tissue distribution, ubiquitously expressed, but highly expressed in the anterior pharynx.

It localises to the mitochondrion. It is found in the mitochondrion inner membrane. The enzyme catalyses (S)-malate(in) + 2-oxoglutarate(out) = (S)-malate(out) + 2-oxoglutarate(in). It catalyses the reaction malonate(in) + 2-oxoglutarate(out) = malonate(out) + 2-oxoglutarate(in). It carries out the reaction succinate(in) + 2-oxoglutarate(out) = succinate(out) + 2-oxoglutarate(in). The catalysed reaction is maleate(in) + 2-oxoglutarate(out) = maleate(out) + 2-oxoglutarate(in). The enzyme catalyses oxaloacetate(in) + 2-oxoglutarate(out) = oxaloacetate(out) + 2-oxoglutarate(in). Catalyzes the transport of 2-oxoglutarate (alpha-oxoglutarate) across the inner mitochondrial membrane in an electroneutral exchange for malate. Can also exchange 2-oxoglutarate for other dicarboxylic acids such as malonate, succinate, maleate and oxaloacetate, although with lower affinity. Contributes to several metabolic processes, including the malate-aspartate shuttle, the oxoglutarate/isocitrate shuttle, in gluconeogenesis from lactate, and in nitrogen metabolism. Maintains mitochondrial fusion and fission events, and the organization and morphology of cristae. Regulator of apoptosis, insulin secretion and germline proliferation. Furthermore, plays a role in the oxidative stress response regulating endogenous levels of reactive oxygen species (ROS). Involved in the regulation of lin-35/Rb-mediated apoptosis in the germline. The protein is Mitochondrial 2-oxoglutarate/malate carrier protein of Caenorhabditis elegans.